Consider the following 163-residue polypeptide: Calcium-binding protein I (163 aa).

3 consecutive EF-hand domains span residues 20 to 42 (DKNKDRQYSIDEIVQLLKKNSKN), 82 to 117 (KPEIDIESFLLRFDKNNDKMISHHELKTKLDELGCG), and 118 to 153 (NSKKTTDYVFEQIDTNKEGSLSYEDLEGFVKFLKQD). 10 residues coordinate Ca(2+): D95, N97, D99, M101, E106, D131, N133, E135, S137, and D142.

The chain is Calcium-binding protein I (cbpI) from Dictyostelium discoideum (Social amoeba).